A 278-amino-acid chain; its full sequence is 4-deoxy-L-threo-5-hexosulose-uronate ketol-isomerase (278 aa).

Residues His-196, His-198, Glu-203, and His-245 each coordinate Zn(2+).

Belongs to the KduI family. Homohexamer. It depends on Zn(2+) as a cofactor.

The catalysed reaction is 5-dehydro-4-deoxy-D-glucuronate = 3-deoxy-D-glycero-2,5-hexodiulosonate. It participates in glycan metabolism; pectin degradation; 2-dehydro-3-deoxy-D-gluconate from pectin: step 4/5. Its function is as follows. Catalyzes the isomerization of 5-dehydro-4-deoxy-D-glucuronate to 3-deoxy-D-glycero-2,5-hexodiulosonate. This chain is 4-deoxy-L-threo-5-hexosulose-uronate ketol-isomerase, found in Escherichia coli (strain 55989 / EAEC).